An 864-amino-acid polypeptide reads, in one-letter code: Leucine--tRNA ligase (864 aa).

A 'HIGH' region motif is present at residues 42–52 (PYPSGKLHMGH). The 'KMSKS' region signature appears at 624–628 (KMSKS). An ATP-binding site is contributed by Lys-627.

The protein belongs to the class-I aminoacyl-tRNA synthetase family.

The protein resides in the cytoplasm. The enzyme catalyses tRNA(Leu) + L-leucine + ATP = L-leucyl-tRNA(Leu) + AMP + diphosphate. The chain is Leucine--tRNA ligase from Burkholderia cenocepacia (strain HI2424).